A 318-amino-acid chain; its full sequence is Apo-salmochelin esterase (318 aa).

Residues Lys-13–Ala-32 traverse the membrane as a helical segment. Active-site residues include Ser-189 and His-287.

It belongs to the esterase D family. Monomer.

The protein localises to the cell inner membrane. It catalyses the reaction enterobactin + H2O = N-(2,3-dihydroxybenzoyl)-L-serine trimer. The enzyme catalyses monoglucosyl-enterobactin + H2O = [N-(2,3-dihydroxybenzoyl)-L-seryl]2-N-(C-5-[deoxy-beta-D-glucosyl]-2,3-dihydroxybenzoyl)-L-serine + H(+). The catalysed reaction is diglucosyl-enterobactin + H2O = N-(2,3-dihydroxybenzoyl)-L-seryl-[N-(C-5-[deoxy-beta-D-glucosyl]-2,3-dihydroxybenzoyl)-L-serine]2 + H(+). It carries out the reaction triglucosyl-enterobactin + H2O = [N-(C-5-[deoxy-beta-D-glucosyl]-2,3-dihydroxybenzoyl)-L-serine]3 + H(+). In terms of biological role, catalyzes the hydrolysis of both the apo and Fe3(+)-bound forms of enterobactin (Ent), monoglucosyl-C-Ent (MGE), diglucosyl-C-Ent (DGE) and triglucosyl-C-Ent (TGE). It prefers apo siderophores as substrates and hydrolyzes the Fe3(+)-bound siderophores very inefficiently. Tends to hydrolyze the trilactone just once to produce linearized trimers. May hydrolyze and linearize some or all of apo enterobactins while they are being exported. The polypeptide is Apo-salmochelin esterase (Escherichia coli O6:H1 (strain CFT073 / ATCC 700928 / UPEC)).